A 780-amino-acid polypeptide reads, in one-letter code: Copper-exporting P-type ATPase (780 aa).

Residues 2-67 (QRIQLNITGM…AVRRAALCTD (66 aa)) enclose the HMA domain. Residues Cys13 and Cys16 each coordinate Cu(+). Helical transmembrane passes span 89-109 (LAVA…FAVL), 114-134 (FPGW…WAAW), 153-173 (TLIS…VFGH), 185-205 (ALLG…VFVL), 348-368 (VFVP…LIAG), and 374-394 (VFSA…GLAT). The active-site 4-aspartylphosphate intermediate is Asp430. A run of 2 helical transmembrane segments spans residues 680–698 (FNMV…IAAA) and 704–722 (LVAG…SNSL).

It belongs to the cation transport ATPase (P-type) (TC 3.A.3) family. Type IB subfamily.

It is found in the cell membrane. It catalyses the reaction Cu(+)(in) + ATP + H2O = Cu(+)(out) + ADP + phosphate + H(+). Functionally, involved in copper export. This Mycobacterium leprae (strain TN) protein is Copper-exporting P-type ATPase (ctpA).